The sequence spans 990 residues: Fibronectin-binding protein A (990 aa).

The signal sequence occupies residues 1–35 (MKNNLRYGIRKHKLGAASVFLGTMIVVGMGQDKEA). Positions 7–18 (YGIRKHKLGAAS) match the YSIRK-G/S signaling motif motif. Disordered regions lie at residues 33-61 (KEAA…SETQ) and 96-193 (PKAV…TEVK). Over residues 37 to 55 (TSEQKTTTVEENGNSATDN) the composition is skewed to polar residues. The tract at residues 37-511 (TSEQKTTTVE…SNKADGNGKN (475 aa)) is ligand-binding A region. Basic and acidic residues-rich tracts occupy residues 112-126 (TVKE…KPQV) and 179-193 (DVAE…TEVK). A fibrinogen/elastin/tropoelastin-binding region spans residues 194 to 511 (GTDVTSKVTV…SNKADGNGKN (318 aa)). The segment at 512-834 (GQIIQNNDFE…EGQQTIEEDT (323 aa)) is fibronectin-binding. Residues 545–574 (ENQDNTPLDIDYHTAIDGEGGYADGYIETI) form a B-1 repeat. The tract at residues 545–604 (ENQDNTPLDIDYHTAIDGEGGYADGYIETIEETDSSAIDIDYHTAVDSEAGHVGGYTESS) is 2 X approximate tandem repeats. The B-2 repeat unit spans residues 575–604 (EETDSSAIDIDYHTAVDSEAGHVGGYTESS). A disordered region spans residues 702-969 (LGYEGGQNSG…EESTNKGMLF (268 aa)). A D-1 repeat occupies 707–744 (GQNSGNQSFEEDTEEDKPKYEQGGNIVDIDFDSVPQIQ). The tract at residues 707 to 850 (GQNSGNQSFE…TPEVPSEPET (144 aa)) is 4 X approximate tandem repeats. The segment covering 741–752 (PQIQGQNNGNQS) has biased composition (polar residues). Residues 745-782 (GQNNGNQSFEEDTEKDKPKYEQGGNIIDIDFDSVPQIH) form a D-2 repeat. The D-3 repeat unit spans residues 783 to 821 (GFNKHNEIIEEDTNKDKPNYQFGGHNSVDFEEDTLPKVS). Over residues 786-800 (KHNEIIEEDTNKDKP) the composition is skewed to basic and acidic residues. The stretch at 822-850 (GQNEGQQTIEEDTTPPTPPTPEVPSEPET) is one D-4; truncated repeat. The segment covering 836–910 (PPTPPTPEVP…PAEPGKPVPP (75 aa)) has biased composition (pro residues). 5 WR repeats span residues 851-864 (PTPP…EPET), 865-878 (PTPP…EPET), 879-892 (PTPP…EPET), 893-906 (PTPP…EPGK), and 907-920 (PVPP…KPSK). Residues 851-920 (PTPPTPEVPS…AEEEPKKPSK (70 aa)) are 5 X tandem repeats, Pro-rich (WR). Positions 954 to 958 (LPETG) match the LPXTG sorting signal motif. Thr-957 carries the pentaglycyl murein peptidoglycan amidated threonine modification. The propeptide at 958–990 (GGEESTNKGMLFGGLFSILGLALLRRNKKNHKA) is removed by sortase.

The protein localises to the secreted. Its subcellular location is the cell wall. Functionally, promotes bacterial attachment to multiple substrates, such as fibronectin (Fn), fibrinogen (Fg), elastin peptides and tropoelastin. This confers to S.aureus the ability to invade endothelial cells. Promotes adherence to and aggregation of activated platelets. The chain is Fibronectin-binding protein A (fnbA) from Staphylococcus aureus (strain bovine RF122 / ET3-1).